The sequence spans 88 residues: Small ribosomal subunit protein bS16 (88 aa).

This sequence belongs to the bacterial ribosomal protein bS16 family.

In Geotalea uraniireducens (strain Rf4) (Geobacter uraniireducens), this protein is Small ribosomal subunit protein bS16.